A 185-amino-acid polypeptide reads, in one-letter code: Keratin-associated protein 4-8 (185 aa).

Tandem repeats lie at residues 14-18 (GCGQD), 19-23 (LCQET), 24-28 (CCCPS), 39-43 (CYRPS), 44-48 (YSVSC), 49-53 (CCRPQ), 54-58 (CCQSV), 59-63 (CCQPT), 64-68 (CCRPS), 69-73 (CCVSS), 74-78 (CCKPQ), 79-83 (CCQSV), 84-88 (CCQPT), 89-93 (CCHPS), 94-98 (CCISS), 99-103 (CCRPS), 104-108 (CCVSS), 109-113 (CCKPQ), 114-118 (CCQSV), 119-123 (CCQPN), 124-128 (CCRPS), 134-138 (CCRPS), 139-143 (CCESS), 144-148 (CCRPC), and 149-164 (CCLR…HTTC). The 25 X 5 AA repeats of C-C-[IKRQVHEC]-[SPRT]-[STCVQPR] stretch occupies residues 14–164 (GCGQDLCQET…CGRVSCHTTC (151 aa)).

The protein belongs to the KRTAP type 4 family. Interacts with hair keratins. In terms of tissue distribution, expressed in the hair follicles.

In the hair cortex, hair keratin intermediate filaments are embedded in an interfilamentous matrix, consisting of hair keratin-associated proteins (KRTAP), which are essential for the formation of a rigid and resistant hair shaft through their extensive disulfide bond cross-linking with abundant cysteine residues of hair keratins. The matrix proteins include the high-sulfur and high-glycine-tyrosine keratins. This chain is Keratin-associated protein 4-8 (KRTAP4-8), found in Homo sapiens (Human).